We begin with the raw amino-acid sequence, 379 residues long: ATP phosphoribosyltransferase regulatory subunit (379 aa).

The protein belongs to the class-II aminoacyl-tRNA synthetase family. HisZ subfamily. As to quaternary structure, heteromultimer composed of HisG and HisZ subunits.

It localises to the cytoplasm. The protein operates within amino-acid biosynthesis; L-histidine biosynthesis; L-histidine from 5-phospho-alpha-D-ribose 1-diphosphate: step 1/9. In terms of biological role, required for the first step of histidine biosynthesis. May allow the feedback regulation of ATP phosphoribosyltransferase activity by histidine. This chain is ATP phosphoribosyltransferase regulatory subunit, found in Sinorhizobium fredii (strain NBRC 101917 / NGR234).